A 336-amino-acid chain; its full sequence is tRNA(Ile)-lysidine synthase (336 aa).

40 to 45 (SGGQDS) contacts ATP.

It belongs to the tRNA(Ile)-lysidine synthase family.

It localises to the cytoplasm. The enzyme catalyses cytidine(34) in tRNA(Ile2) + L-lysine + ATP = lysidine(34) in tRNA(Ile2) + AMP + diphosphate + H(+). Ligates lysine onto the cytidine present at position 34 of the AUA codon-specific tRNA(Ile) that contains the anticodon CAU, in an ATP-dependent manner. Cytidine is converted to lysidine, thus changing the amino acid specificity of the tRNA from methionine to isoleucine. This chain is tRNA(Ile)-lysidine synthase, found in Prochlorococcus marinus (strain SARG / CCMP1375 / SS120).